A 536-amino-acid polypeptide reads, in one-letter code: Thiamine transport system permease protein ThiP (536 aa).

The next 12 helical transmembrane spans lie at 12–32 (WLIPGVSATTLVVAVALAAFL), 58–78 (FSFWQAFLSALLSVIPAIFLA), 95–115 (LCAMTLILPVLVAVFGILSVY), 134–154 (FSPYGLQGILLAHVFFNLPMA), 199–219 (VAALIFMLCFASFATVLSLGG), 240–260 (PARAAMLALLQMVCCLGLVLL), 293–313 (VLIVLALLLLLPPLLAVIVDG), 334–354 (SLRIALAAGVLCVVLTMMLLW), 374–394 (SGMLILAMPGIVLATGFFLLL), 404–424 (ADGIVIFTNALMAIPYALKVL), 463–483 (AQALAFACVLSIGDFGVVALF), and 506–526 (DGAVTALILLLLCFLLFTVIE). Positions 56 to 261 (VRFSFWQAFL…VCCLGLVLLS (206 aa)) constitute an ABC transmembrane type-1 1 domain. Residues 331–525 (LWTSLRIALA…LLCFLLFTVI (195 aa)) form the ABC transmembrane type-1 2 domain.

This sequence belongs to the binding-protein-dependent transport system permease family. CysTW subfamily. The complex is composed of two ATP-binding proteins (ThiQ), two transmembrane proteins (ThiP) and a solute-binding protein (ThiB).

It localises to the cell inner membrane. Transport is inhibited by the sulfhydryl-specific modifier N-ethylmaleimide. Functionally, part of the ABC transporter complex ThiBPQ involved in thiamine import. Probably responsible for the translocation of the substrate across the membrane. The protein is Thiamine transport system permease protein ThiP (thiP) of Escherichia coli (strain K12).